We begin with the raw amino-acid sequence, 159 residues long: Putative ribosomal RNA large subunit methyltransferase H (159 aa).

S-adenosyl-L-methionine contacts are provided by residues L76, G108, and 127–132 (FSKMTF).

Belongs to the RNA methyltransferase RlmH family.

It is found in the cytoplasm. The enzyme catalyses pseudouridine(1915) in 23S rRNA + S-adenosyl-L-methionine = N(3)-methylpseudouridine(1915) in 23S rRNA + S-adenosyl-L-homocysteine + H(+). Specifically methylates the pseudouridine at position 1915 (m3Psi1915) in 23S rRNA. The sequence is that of Putative ribosomal RNA large subunit methyltransferase H from Methanococcus maripaludis (strain C5 / ATCC BAA-1333).